The chain runs to 512 residues: Ribose import ATP-binding protein RbsA 1 (512 aa).

2 consecutive ABC transporter domains span residues 8–244 (FRME…IGRE) and 254–502 (AHRG…LNIA). 40–47 (GENGAGKS) contacts ATP.

This sequence belongs to the ABC transporter superfamily. Ribose importer (TC 3.A.1.2.1) family. As to quaternary structure, the complex is composed of an ATP-binding protein (RbsA), two transmembrane proteins (RbsC) and a solute-binding protein (RbsB).

Its subcellular location is the cell inner membrane. The enzyme catalyses D-ribose(out) + ATP + H2O = D-ribose(in) + ADP + phosphate + H(+). In terms of biological role, part of the ABC transporter complex RbsABC involved in ribose import. Responsible for energy coupling to the transport system. This Rhizobium johnstonii (strain DSM 114642 / LMG 32736 / 3841) (Rhizobium leguminosarum bv. viciae) protein is Ribose import ATP-binding protein RbsA 1.